A 433-amino-acid polypeptide reads, in one-letter code: Serine hydroxymethyltransferase (433 aa).

Residue 121–123 (AHV) coordinates (6S)-5,6,7,8-tetrahydrofolate. An N6-(pyridoxal phosphate)lysine modification is found at lysine 227. Residue glutamate 243 participates in (6S)-5,6,7,8-tetrahydrofolate binding.

This sequence belongs to the SHMT family. As to quaternary structure, homodimer. It depends on pyridoxal 5'-phosphate as a cofactor.

It localises to the cytoplasm. The enzyme catalyses 5,10-methylenetetrahydrosulfopterin + glycine + H2O = tetrahydrosulfopterin + L-serine. It functions in the pathway amino-acid biosynthesis; glycine biosynthesis; glycine from L-serine: step 1/1. Is completely inhibited by addition of NaCNBH(3) in vitro; this reagent is a known inhibitor of PLP enzymes, that reduces the internal aldimine of PLP to the catalytically inactive and stable secondary amine. Is also inhibited by L-cysteine, which forms a thiazolidine complex with the active site PLP. In terms of biological role, catalyzes the reversible interconversion of serine and glycine with the modified folate sulfopterin serving as the one-carbon carrier. Cannot use tetrahydrofolate (THF or H4PteGlu) as the pteridine substrate. Also exhibits a pteridine-independent aldolase activity toward beta-hydroxyamino acids, producing glycine and aldehydes, via a retro-aldol mechanism. Thus, is able to catalyze the cleavage of both allo-threonine and beta-phenylserine. This chain is Serine hydroxymethyltransferase, found in Saccharolobus solfataricus (strain ATCC 35092 / DSM 1617 / JCM 11322 / P2) (Sulfolobus solfataricus).